Consider the following 285-residue polypeptide: Protein phosphatase 1 regulatory subunit 3B (285 aa).

Residues 62–65 (RVSF) carry the PP1-binding motif motif. The CBM21 domain maps to 125–233 (RNRLQADHVC…SNRGKNYRII (109 aa)). S261 is modified (phosphoserine).

As to quaternary structure, interacts with glycogen, PPP1CC catalytic subunit of PP1 and PYGL. Associates with glycogen particles. Forms complexes with debranching enzyme, glycogen phosphorylase, glycogen synthase and phosphorylase kinase which is necessary for its regulation of PP1 activity. As to expression, highly expressed in the liver and, at lower levels, in skeletal muscle, including in vastus lateralis, gastrocnemius and soleus (at protein level). Highest mRNA levels are observed in skeletal muscle, and only moderate levels in liver and heart. Weak expression in placenta and lung.

Functionally, acts as a glycogen-targeting subunit for phosphatase PP1. Facilitates interaction of the PP1 with enzymes of the glycogen metabolism and regulates its activity. Suppresses the rate at which PP1 dephosphorylates (inactivates) glycogen phosphorylase and enhances the rate at which it activates glycogen synthase and therefore limits glycogen breakdown. Its activity is inhibited by PYGL, resulting in inhibition of the glycogen synthase and glycogen phosphorylase phosphatase activities of PP1. Dramatically increases basal and insulin-stimulated glycogen synthesis upon overexpression in hepatocytes. In Homo sapiens (Human), this protein is Protein phosphatase 1 regulatory subunit 3B (PPP1R3B).